Here is a 1249-residue protein sequence, read N- to C-terminus: ATP-dependent helicase/nuclease subunit A (1249 aa).

In terms of domain architecture, UvrD-like helicase ATP-binding spans 5 to 482; that stretch reads TNYTPSQQAV…IVLAENFRSV (478 aa). ATP is bound at residue 26–33; it reads ASAGSGKT. The UvrD-like helicase C-terminal domain occupies 521 to 811; sequence ADMPQTTNLL…NVMTIHGSKG (291 aa).

It belongs to the helicase family. AddA subfamily. Heterodimer of AddA and AddB/RexB. Requires Mg(2+) as cofactor.

The catalysed reaction is Couples ATP hydrolysis with the unwinding of duplex DNA by translocating in the 3'-5' direction.. The enzyme catalyses ATP + H2O = ADP + phosphate + H(+). Functionally, the heterodimer acts as both an ATP-dependent DNA helicase and an ATP-dependent, dual-direction single-stranded exonuclease. Recognizes the chi site generating a DNA molecule suitable for the initiation of homologous recombination. The AddA nuclease domain is required for chi fragment generation; this subunit has the helicase and 3' -&gt; 5' nuclease activities. In Lactiplantibacillus plantarum (strain ATCC BAA-793 / NCIMB 8826 / WCFS1) (Lactobacillus plantarum), this protein is ATP-dependent helicase/nuclease subunit A.